A 175-amino-acid chain; its full sequence is Adenine phosphoribosyltransferase (175 aa).

The protein belongs to the purine/pyrimidine phosphoribosyltransferase family. In terms of assembly, homodimer.

It localises to the cytoplasm. The enzyme catalyses AMP + diphosphate = 5-phospho-alpha-D-ribose 1-diphosphate + adenine. It functions in the pathway purine metabolism; AMP biosynthesis via salvage pathway; AMP from adenine: step 1/1. Catalyzes a salvage reaction resulting in the formation of AMP, that is energically less costly than de novo synthesis. The protein is Adenine phosphoribosyltransferase of Synechococcus sp. (strain JA-3-3Ab) (Cyanobacteria bacterium Yellowstone A-Prime).